We begin with the raw amino-acid sequence, 355 residues long: Uroporphyrinogen decarboxylase (355 aa).

Substrate contacts are provided by residues 27–31 (RQAGR), aspartate 77, tyrosine 154, threonine 209, and histidine 327.

It belongs to the uroporphyrinogen decarboxylase family. As to quaternary structure, homodimer.

It is found in the cytoplasm. It catalyses the reaction uroporphyrinogen III + 4 H(+) = coproporphyrinogen III + 4 CO2. Its pathway is porphyrin-containing compound metabolism; protoporphyrin-IX biosynthesis; coproporphyrinogen-III from 5-aminolevulinate: step 4/4. Catalyzes the decarboxylation of four acetate groups of uroporphyrinogen-III to yield coproporphyrinogen-III. The polypeptide is Uroporphyrinogen decarboxylase (Yersinia pestis bv. Antiqua (strain Antiqua)).